The chain runs to 400 residues: Acetate kinase (400 aa).

Residue Asn10 coordinates Mg(2+). Lys17 serves as a coordination point for ATP. Arg91 provides a ligand contact to substrate. The Proton donor/acceptor role is filled by Asp150. ATP is bound by residues 210-214 (HLGNG), 285-287 (DCR), and 333-337 (GIGEN). Glu387 contacts Mg(2+).

The protein belongs to the acetokinase family. In terms of assembly, homodimer. Mg(2+) is required as a cofactor. Mn(2+) serves as cofactor.

The protein resides in the cytoplasm. The enzyme catalyses acetate + ATP = acetyl phosphate + ADP. It functions in the pathway metabolic intermediate biosynthesis; acetyl-CoA biosynthesis; acetyl-CoA from acetate: step 1/2. Its function is as follows. Catalyzes the formation of acetyl phosphate from acetate and ATP. Can also catalyze the reverse reaction. This Escherichia coli O157:H7 protein is Acetate kinase.